Here is a 267-residue protein sequence, read N- to C-terminus: Putative [LysW]-aminoadipate/[LysW]-glutamate kinase (267 aa).

Substrate-binding positions include 37-38 (GG), R64, and N169.

This sequence belongs to the acetylglutamate kinase family. LysZ subfamily.

The protein resides in the cytoplasm. It carries out the reaction [amino-group carrier protein]-C-terminal-N-(1,4-dicarboxybutan-1-yl)-L-glutamine + ATP = [amino-group carrier protein]-C-terminal-N-(1-carboxy-5-phosphooxy-5-oxopentan-1-yl)-L-glutamine + ADP. The catalysed reaction is [amino-group carrier protein]-C-terminal-gamma-(L-glutamyl)-L-glutamate + ATP = [amino-group carrier protein]-C-terminal-gamma-(5-phospho-L-glutamyl)-L-glutamate + ADP. The protein operates within amino-acid biosynthesis; L-lysine biosynthesis via AAA pathway; L-lysine from L-alpha-aminoadipate (Thermus route): step 2/5. It participates in amino-acid biosynthesis; L-arginine biosynthesis. Its function is as follows. Involved in both the arginine and lysine biosynthetic pathways. Phosphorylates the LysW-bound precursors glutamate (for arginine biosynthesis), respectively alpha-aminoadipate (for lysine biosynthesis). In Nitrosopumilus maritimus (strain SCM1), this protein is Putative [LysW]-aminoadipate/[LysW]-glutamate kinase.